We begin with the raw amino-acid sequence, 136 residues long: Large ribosomal subunit protein bL19 (136 aa).

Belongs to the bacterial ribosomal protein bL19 family.

In terms of biological role, this protein is located at the 30S-50S ribosomal subunit interface and may play a role in the structure and function of the aminoacyl-tRNA binding site. The chain is Large ribosomal subunit protein bL19 from Xylella fastidiosa (strain M23).